We begin with the raw amino-acid sequence, 719 residues long: Leucine-rich repeat and fibronectin type-III domain-containing protein 5 (719 aa).

A signal peptide spans 1–17; sequence MEKFLFYLFLIGIAVRA. The LRRNT domain occupies 18 to 51; that stretch reads QICPKRCVCQILSPNLATLCAKKGLLFVPPNIDR. Residues 18 to 529 are Extracellular-facing; it reads QICPKRCVCQ…MQSQFLGGTM (512 aa). 7 LRR repeats span residues 52 to 73, 76 to 97, 100 to 121, 124 to 145, 148 to 169, 172 to 193, and 196 to 217; these read RTVELRLADNFVTNIKRKDFAN, SLVDLTLSRNTISFITPHAFAD, NLRALHLNSNRLTKITNDMFSG, NLHHLILNNNQLTLISSTAFDD, ALEELDLSYNNLETIPWDAVEK, SLHTLSLDHNMIDNIPKGTFSH, and KMTRLDVTSNKLQKLPPDPLFQ. An N-linked (GlcNAc...) asparagine glycan is attached at N73. Residues 240–286 enclose the LRRCT domain; that stretch reads NPLHCNCELLWLRRLSREDDLETCASPALLTGRYFWSIPEEEFLCEP. Residues 287 to 373 enclose the Ig-like domain; sequence PLITRHTHEM…GEATQTVDLH (87 aa). Residues C308 and C357 are joined by a disulfide bond. N330, N339, N382, N406, and N452 each carry an N-linked (GlcNAc...) asparagine glycan. A disordered region spans residues 385 to 416; that stretch reads NHIHEPDPGSSDISTSTKSGSNASSSNGDTKM. The segment covering 393 to 412 has biased composition (low complexity); the sequence is GSSDISTSTKSGSNASSSNG. One can recognise a Fibronectin type-III domain in the interval 414–503; sequence TKMSQDKIVV…ITSLTATRVV (90 aa). A helical transmembrane segment spans residues 530–550; sequence IIIIGGIIVASVLVFIIILMI. Residues 551-719 lie on the Cytoplasmic side of the membrane; the sequence is RYKVCNNNGQ…VQETQRLESI (169 aa). The segment covering 614–627 has biased composition (low complexity); that stretch reads SETCSSQDSSTTTS. The interval 614 to 719 is disordered; sequence SETCSSQDSS…VQETQRLESI (106 aa). Composition is skewed to polar residues over residues 628–641, 654–677, and 702–713; these read ALPPTWTSSAPVSQ, EPQSEAVTNVESQNTNRNNSTALQ, and LLTNVDQNVQET.

It belongs to the LRFN family. In terms of assembly, can form heteromeric complexes with LRFN1, LRFN2, LRFN3 and LFRN4. Able to form homomeric complexes across cell junctions, between adjacent cells. Does not interact with DLG1, DLG2 or DLG3. Does not interact with DLG4. Post-translationally, glycosylated. Predominantly expressed in the brain, with a weak, but broad expression in the cerebral cortex and diencephalic nuclei. Strongly expressed in both the pyramidal layer and the dentate gyrus of the hippocampus. Also detected in other parts of the central nervous system, including the olfactory bulb, pons, cerebellum, and medulla oblongata, as well as in the peripheral nervous system, such as the ganglia of cranial nerves and the dorsal root ganglion during gestation.

Its subcellular location is the membrane. Functionally, cell adhesion molecule that mediates homophilic cell-cell adhesion in a Ca(2+)-independent manner. Promotes neurite outgrowth in hippocampal neurons. The sequence is that of Leucine-rich repeat and fibronectin type-III domain-containing protein 5 (Lrfn5) from Mus musculus (Mouse).